The following is a 462-amino-acid chain: MSSGKIVQVIGAVVDVAFNQDVVPTVYHALEVHIDSFNKKLILEVAQQLGGGIVRCIAMGNTDGLRRGLVVINLKHSIEVPVGKETLGRVMNVLGEPIDMKGPIKEKEKWSIHRSAPLYSELSTDQDLLVTGIKVIDLMCPFSKGGKIGLFGGAGVGKTVNMMELIRNIAVEHSGYSVFVGVGERTREGNDFYNEMINSDVINKVALVYGQMNEPPGNRLRVALTGLTMAEKFRDEGHDVLLFIDNIYRYTLAGTEVSALLGRIPSAVGYQSTLSEEMGILQERITSTSLGSITSVQAVYVPADDLTDPSPATTFSHLDATIVLSRQIAALGIYPSVDPLDSNSQQLNPLIVGQEHYNVARDVKSILQRYQELKDIIAILGMDELSEEDKLIVLRSRKIQRFLSQPFFVAEVFTGFSGVYVSLRDTIQGFKEIIEGKYDHIPEQAFYMVGTIEEVIKKNKTL.

Gly-152–Thr-159 contacts ATP.

Belongs to the ATPase alpha/beta chains family. F-type ATPases have 2 components, CF(1) - the catalytic core - and CF(0) - the membrane proton channel. CF(1) has five subunits: alpha(3), beta(3), gamma(1), delta(1), epsilon(1). CF(0) has three main subunits: a(1), b(2) and c(9-12). The alpha and beta chains form an alternating ring which encloses part of the gamma chain. CF(1) is attached to CF(0) by a central stalk formed by the gamma and epsilon chains, while a peripheral stalk is formed by the delta and b chains.

It is found in the cell inner membrane. The catalysed reaction is ATP + H2O + 4 H(+)(in) = ADP + phosphate + 5 H(+)(out). Produces ATP from ADP in the presence of a proton gradient across the membrane. The catalytic sites are hosted primarily by the beta subunits. The polypeptide is ATP synthase subunit beta (Blochmanniella pennsylvanica (strain BPEN)).